A 218-amino-acid chain; its full sequence is Adenylate kinase (218 aa).

Residue 10 to 15 coordinates ATP; the sequence is GAGKGT. The NMP stretch occupies residues 30–59; it reads STGDMLRAAVKAGTPLGIEAKKVMDSGGLV. Residues Thr31, Arg36, 57-59, 85-88, and Gln92 contribute to the AMP site; these read GLV and GFPR. Positions 122 to 159 are LID; the sequence is GRRSHSASGRTYHVKYNPPKVEGLDDVTGEPLIQREDD. Residues Arg123 and 132-133 each bind ATP; that span reads TY. Residues Arg156 and Arg167 each contribute to the AMP site. Residue Gly203 participates in ATP binding.

This sequence belongs to the adenylate kinase family. In terms of assembly, monomer.

It localises to the cytoplasm. The enzyme catalyses AMP + ATP = 2 ADP. Its pathway is purine metabolism; AMP biosynthesis via salvage pathway; AMP from ADP: step 1/1. In terms of biological role, catalyzes the reversible transfer of the terminal phosphate group between ATP and AMP. Plays an important role in cellular energy homeostasis and in adenine nucleotide metabolism. The sequence is that of Adenylate kinase from Polaromonas naphthalenivorans (strain CJ2).